We begin with the raw amino-acid sequence, 271 residues long: Aliphatic sulfonates import ATP-binding protein SsuB (271 aa).

The ABC transporter domain maps to 13–234 (ITLESIGKRY…RKGSAKLAAL (222 aa)). Residue 45–52 (GRSGCGKS) participates in ATP binding. The interval 250–271 (EASRQGIKASRQGTATSRRVAN) is disordered. Over residues 260-271 (RQGTATSRRVAN) the composition is skewed to polar residues.

It belongs to the ABC transporter superfamily. Aliphatic sulfonates importer (TC 3.A.1.17.2) family. The complex is composed of two ATP-binding proteins (SsuB), two transmembrane proteins (SsuC) and a solute-binding protein (SsuA).

It localises to the cell inner membrane. The catalysed reaction is ATP + H2O + aliphatic sulfonate-[sulfonate-binding protein]Side 1 = ADP + phosphate + aliphatic sulfonateSide 2 + [sulfonate-binding protein]Side 1.. Part of the ABC transporter complex SsuABC involved in aliphatic sulfonates import. Responsible for energy coupling to the transport system. This is Aliphatic sulfonates import ATP-binding protein SsuB from Yersinia pestis bv. Antiqua (strain Antiqua).